The sequence spans 329 residues: Biotin synthase (329 aa).

A Radical SAM core domain is found at 46–275; the sequence is YYGNKVKLNM…TKEIRISGGR (230 aa). Residues Cys64, Cys68, and Cys71 each coordinate [4Fe-4S] cluster. Residues Cys108, Cys140, Cys200, and Arg270 each contribute to the [2Fe-2S] cluster site.

It belongs to the radical SAM superfamily. Biotin synthase family. As to quaternary structure, homodimer. It depends on [4Fe-4S] cluster as a cofactor. Requires [2Fe-2S] cluster as cofactor.

It catalyses the reaction (4R,5S)-dethiobiotin + (sulfur carrier)-SH + 2 reduced [2Fe-2S]-[ferredoxin] + 2 S-adenosyl-L-methionine = (sulfur carrier)-H + biotin + 2 5'-deoxyadenosine + 2 L-methionine + 2 oxidized [2Fe-2S]-[ferredoxin]. Its pathway is cofactor biosynthesis; biotin biosynthesis; biotin from 7,8-diaminononanoate: step 2/2. Functionally, catalyzes the conversion of dethiobiotin (DTB) to biotin by the insertion of a sulfur atom into dethiobiotin via a radical-based mechanism. The sequence is that of Biotin synthase from Anoxybacillus flavithermus (strain DSM 21510 / WK1).